We begin with the raw amino-acid sequence, 37 residues long: Large ribosomal subunit protein bL36A (37 aa).

This sequence belongs to the bacterial ribosomal protein bL36 family.

The sequence is that of Large ribosomal subunit protein bL36A from Neisseria meningitidis serogroup C (strain 053442).